Here is a 391-residue protein sequence, read N- to C-terminus: Toluene efflux pump periplasmic linker protein TtgG (391 aa).

An N-terminal signal peptide occupies residues 1 to 32 (MRAERWSQTVRQIRSPRALRVIPLTALMLISG). A lipid anchor (N-palmitoyl cysteine) is attached at Cys33. Cys33 is lipidated: S-diacylglycerol cysteine. Residues 107-136 (RTYEAQLRRAEANRTSAQNLARRYETLLKT) are a coiled coil.

Belongs to the membrane fusion protein (MFP) (TC 8.A.1) family.

Its subcellular location is the cell inner membrane. Functionally, the periplasmic linker component of an organic solvent efflux pump. Involved in export of a number of organic solvents, including toluene and styrene. This is the most important solvent efflux pump in this strain, although it can export AMP and some antibiotics. This Pseudomonas putida (strain DOT-T1E) protein is Toluene efflux pump periplasmic linker protein TtgG (ttgG).